Consider the following 370-residue polypeptide: Lipoyl synthase, mitochondrial (370 aa).

Residues C104, C109, C115, C135, C139, C142, and S350 each contribute to the [4Fe-4S] cluster site. The Radical SAM core domain occupies 118–339 (GGDKSKATAT…KQKALELGFL (222 aa)).

It belongs to the radical SAM superfamily. Lipoyl synthase family. [4Fe-4S] cluster is required as a cofactor.

The protein resides in the mitochondrion. It carries out the reaction [[Fe-S] cluster scaffold protein carrying a second [4Fe-4S](2+) cluster] + N(6)-octanoyl-L-lysyl-[protein] + 2 oxidized [2Fe-2S]-[ferredoxin] + 2 S-adenosyl-L-methionine + 4 H(+) = [[Fe-S] cluster scaffold protein] + N(6)-[(R)-dihydrolipoyl]-L-lysyl-[protein] + 4 Fe(3+) + 2 hydrogen sulfide + 2 5'-deoxyadenosine + 2 L-methionine + 2 reduced [2Fe-2S]-[ferredoxin]. It functions in the pathway protein modification; protein lipoylation via endogenous pathway; protein N(6)-(lipoyl)lysine from octanoyl-[acyl-carrier-protein]: step 2/2. In terms of biological role, catalyzes the radical-mediated insertion of two sulfur atoms into the C-6 and C-8 positions of the octanoyl moiety bound to the lipoyl domains of lipoate-dependent enzymes, thereby converting the octanoylated domains into lipoylated derivatives. The polypeptide is Lipoyl synthase, mitochondrial (Kluyveromyces lactis (strain ATCC 8585 / CBS 2359 / DSM 70799 / NBRC 1267 / NRRL Y-1140 / WM37) (Yeast)).